The following is a 73-amino-acid chain: DNA gyrase inhibitor YacG (73 aa).

Zn(2+)-binding residues include C14, C17, C30, and C34. Residues 54 to 73 (AEQADDTAGPGAAEDDTDSH) form a disordered region.

Belongs to the DNA gyrase inhibitor YacG family. Interacts with GyrB. Requires Zn(2+) as cofactor.

Inhibits all the catalytic activities of DNA gyrase by preventing its interaction with DNA. Acts by binding directly to the C-terminal domain of GyrB, which probably disrupts DNA binding by the gyrase. The protein is DNA gyrase inhibitor YacG of Hyphomonas neptunium (strain ATCC 15444).